The chain runs to 406 residues: Putative permease Rv2963 (406 aa).

The next 9 membrane-spanning stretches (helical) occupy residues Trp30 to Val50, Leu67 to Leu87, Leu111 to Glu131, Phe132 to Ala152, Leu208 to Val228, Ala246 to Gly266, Gly278 to Leu298, Val312 to Phe332, and Val361 to Pro381.

It belongs to the UPF0718 family.

Its subcellular location is the cell membrane. This is Putative permease Rv2963 from Mycobacterium tuberculosis (strain ATCC 25618 / H37Rv).